Here is a 1036-residue protein sequence, read N- to C-terminus: KAT8 regulatory NSL complex subunit 1 (1036 aa).

Lys-104 carries the N6-acetyllysine modification. 2 disordered regions span residues 145 to 211 and 226 to 257; these read GQTA…CTLP and NSTANKSSVNSMDQPALQGSSRLSPSTDSSSN. Positions 226 to 244 are enriched in polar residues; sequence NSTANKSSVNSMDQPALQG. The segment covering 245-256 has biased composition (low complexity); sequence SSRLSPSTDSSS. At Ser-249 the chain carries Phosphoserine. Lys-262 participates in a covalent cross-link: Glycyl lysine isopeptide (Lys-Gly) (interchain with G-Cter in SUMO2). Ser-268 bears the Phosphoserine mark. Residues 285–312 are a coiled coil; the sequence is TALLRRQADIEIRARRLQKRLQVVQAKQ. Lys-331 participates in a covalent cross-link: Glycyl lysine isopeptide (Lys-Gly) (interchain with G-Cter in SUMO2). Disordered regions lie at residues 399–423 and 739–787; these read DSDVTDSSSGGESDIEEEELTRADP and SPSY…RRRG. The segment covering 759 to 772 has biased composition (low complexity); that stretch reads STSSDTSTPTSSGS. Positions 781-813 are required for activation of KAT8 histone acetyltransferase activity; the sequence is PVRRRRGESSFDINNIVIPMSVAATTRVEKLQY. The PEHE domain occupies 815-966; it reads EILTPSWREV…GLDEQSVQPW (152 aa). The interval 841-859 is interaction with KAT8 HAT domain; that stretch reads EDLSDAAFAALHAKCEEME. The interval 869 to 931 is disordered; the sequence is VPPQRRGSRS…SPISPELHSA (63 aa). Over residues 886 to 896 the composition is skewed to polar residues; that stretch reads TTPQLGSANPS. Over residues 906-919 the composition is skewed to low complexity; sequence SSSHSLSEFSHGQS. A phosphoserine mark is found at Ser-922 and Ser-925. Phosphothreonine is present on Thr-934. Ser-976 carries the post-translational modification Phosphoserine. The segment at 989-1020 is disordered; the sequence is DTAARCTRRTSGSKTGREAEVAPTSPPVVPLK.

In terms of assembly, component of the NSL complex at least composed of MOF/KAT8, KANSL1, KANSL2, KANSL3, MCRS1, PHF20, OGT1/OGT, WDR5 and HCFC1. Interacts (via PEHE domain) with KAT8 (via HAT domain); the interaction is direct. Component of some MLL1/MLL complex, at least composed of the core components KMT2A/MLL1, ASH2L, HCFC1, WDR5 and RBBP5, as well as the facultative components BACC1, CHD8, E2F6, HSP70, INO80C, KANSL1, LAS1L, MAX, MCRS1, MGA, KAT8/MOF, PELP1, PHF20, PRP31, RING2, RUVB1/TIP49A, RUVB2/TIP49B, SENP3, TAF1, TAF4, TAF6, TAF7, TAF9 and TEX10.

The protein localises to the nucleus. The protein resides in the chromosome. Its subcellular location is the centromere. It localises to the kinetochore. It is found in the mitochondrion. The protein localises to the cytoplasm. The protein resides in the cytoskeleton. Its subcellular location is the spindle pole. Functionally, non-catalytic component of the NSL histone acetyltransferase complex, a multiprotein complex that mediates histone H4 acetylation at 'Lys-5'- and 'Lys-8' (H4K5ac and H4K8ac) at transcription start sites and promotes transcription initiation. The NSL complex also acts as a regulator of gene expression in mitochondria. In addition to its role in transcription, KANSL1 also plays an essential role in spindle assembly during mitosis. Associates with microtubule ends and contributes to microtubule stability. This Mus musculus (Mouse) protein is KAT8 regulatory NSL complex subunit 1 (Kansl1).